We begin with the raw amino-acid sequence, 305 residues long: D-alanine--D-alanine ligase (305 aa).

One can recognise an ATP-grasp domain in the interval 105–300 (KMIWQAAGIN…FDELVVQILE (196 aa)). 131–186 (ADRLGLPLIIKPAREGSTLGLNKVDNEQDFRSAYQAAAEYDSLVLAEQFIQGIELT) serves as a coordination point for ATP. Residues aspartate 254, glutamate 267, and asparagine 269 each contribute to the Mg(2+) site.

It belongs to the D-alanine--D-alanine ligase family. The cofactor is Mg(2+). Requires Mn(2+) as cofactor.

The protein localises to the cytoplasm. The enzyme catalyses 2 D-alanine + ATP = D-alanyl-D-alanine + ADP + phosphate + H(+). It functions in the pathway cell wall biogenesis; peptidoglycan biosynthesis. In terms of biological role, cell wall formation. This Nitrosomonas europaea (strain ATCC 19718 / CIP 103999 / KCTC 2705 / NBRC 14298) protein is D-alanine--D-alanine ligase.